The chain runs to 522 residues: ARS-binding protein 1 (522 aa).

In terms of domain architecture, HTH CENPB-type spans 70 to 144; the sequence is DVKRNRPPKY…RKRHILHAIN (75 aa). Position 460 is a phosphothreonine (Thr-460).

Interacts with mcm10.

The protein resides in the nucleus. In terms of biological role, binds, preferentially, to the Maundrell ARS consensus sequence within ARS3002. This Schizosaccharomyces pombe (strain 972 / ATCC 24843) (Fission yeast) protein is ARS-binding protein 1 (abp1).